The following is a 192-amino-acid chain: Protein FAM169BP (192 aa).

The tract at residues 121 to 192 (YQAHPGNSED…PPGKLTRSSP (72 aa)) is disordered. Acidic residues predominate over residues 159–177 (EELEDTKDDPECGVEEEDA).

This sequence belongs to the FAM169 family.

The chain is Protein FAM169BP from Homo sapiens (Human).